Here is a 162-residue protein sequence, read N- to C-terminus: Caveolin-2 (162 aa).

The Cytoplasmic portion of the chain corresponds to 1–86; the sequence is MGLETEKADV…FEISKYVIYK (86 aa). Y19 is subject to Phosphotyrosine; by SRC. A phosphoserine mark is found at S20 and S23. Y27 carries the post-translational modification Phosphotyrosine; by SRC. S36 bears the Phosphoserine mark. Positions 87-107 form an intramembrane region, helical; sequence FLTVFLAIPLAFIAGILFATL. Residues 108–162 are Cytoplasmic-facing; that stretch reads SCLHIWILMPFVKTCLMVLPSVQTIWKSVTDVVIGPLCTSVGRIFSSVSMQLSHD.

Belongs to the caveolin family. Monomer or homodimer. Interacts with CAV1; the interaction forms a stable heterooligomeric complex that is required for targeting to lipid rafts and for caveolae formation. Tyrosine phosphorylated forms do not form heterooligomers with the Tyr-19-phosphorylated form existing as a monomer or dimer and the Tyr-27-form as a monomer only. Interacts (tyrosine phosphorylated form) with the SH2 domain-containing proteins, RASA1, NCK1 and SRC. Interacts (tyrosine phosphorylated form) with INSR; the interaction (Tyr-27-phosphorylated form) is increased on insulin stimulation. Interacts (Tyr-19-phosphorylated form) with MAPK1 (phosphorylated form); the interaction, promoted by insulin, leads to nuclear location and MAPK1 activation. Interacts with STAT3; the interaction is increased on insulin-induced tyrosine phosphorylation leading to STAT activation. In terms of processing, phosphorylated on serine and tyrosine residues. CAV1 promotes phosphorylation on Ser-23 which targets the complex to the plasma membrane, lipid rafts and caveolae. Phosphorylation on Ser-36 appears to modulate mitosis in endothelial cells. Phosphorylation on both Tyr-19 and Tyr-27 is required for insulin-induced 'Ser-727' phosphorylation of STAT3 and its activation. Phosphorylation on Tyr-19 is required for insulin-induced phosphorylation of MAPK1 and DNA binding of STAT3. Tyrosine phosphorylation is induced by both EGF and insulin. In terms of tissue distribution, in the retina, mainly expressed in vessels, but also diffuse expression in the inner and outer plexiform layers and in the inner nuclear layer.

The protein localises to the nucleus. It is found in the cytoplasm. The protein resides in the golgi apparatus membrane. Its subcellular location is the cell membrane. It localises to the membrane. The protein localises to the caveola. In terms of biological role, may act as a scaffolding protein within caveolar membranes. Interacts directly with G-protein alpha subunits and can functionally regulate their activity. Acts as an accessory protein in conjunction with CAV1 in targeting to lipid rafts and driving caveolae formation. The Ser-36 phosphorylated form has a role in modulating mitosis in endothelial cells. Positive regulator of cellular mitogenesis of the MAPK signaling pathway. Required for the insulin-stimulated nuclear translocation and activation of MAPK1 and STAT3, and the subsequent regulation of cell cycle progression. In Rattus norvegicus (Rat), this protein is Caveolin-2 (Cav2).